Here is a 99-residue protein sequence, read N- to C-terminus: Small ribosomal subunit protein uS14m (99 aa).

This sequence belongs to the universal ribosomal protein uS14 family.

It is found in the mitochondrion. The chain is Small ribosomal subunit protein uS14m (RPS14) from Acanthamoeba castellanii (Amoeba).